Reading from the N-terminus, the 404-residue chain is Cysteine desulfurase IscS (404 aa).

Pyridoxal 5'-phosphate is bound by residues 75-76, N155, Q183, and 203-205; these read AT and SGH. N6-(pyridoxal phosphate)lysine is present on K206. T243 lines the pyridoxal 5'-phosphate pocket. C328 functions as the Cysteine persulfide intermediate in the catalytic mechanism. Residue C328 participates in [2Fe-2S] cluster binding.

It belongs to the class-V pyridoxal-phosphate-dependent aminotransferase family. NifS/IscS subfamily. Homodimer. Forms a heterotetramer with IscU, interacts with other sulfur acceptors. It depends on pyridoxal 5'-phosphate as a cofactor.

The protein localises to the cytoplasm. It carries out the reaction (sulfur carrier)-H + L-cysteine = (sulfur carrier)-SH + L-alanine. It participates in cofactor biosynthesis; iron-sulfur cluster biosynthesis. In terms of biological role, master enzyme that delivers sulfur to a number of partners involved in Fe-S cluster assembly, tRNA modification or cofactor biosynthesis. Catalyzes the removal of elemental sulfur and selenium atoms from cysteine and selenocysteine to produce alanine. Functions as a sulfur delivery protein for Fe-S cluster synthesis onto IscU, an Fe-S scaffold assembly protein, as well as other S acceptor proteins. Also functions as a selenium delivery protein in the pathway for the biosynthesis of selenophosphate. The polypeptide is Cysteine desulfurase IscS (Salmonella typhi).